A 96-amino-acid polypeptide reads, in one-letter code: UPF0235 protein ESA_00387 (96 aa).

The protein belongs to the UPF0235 family.

The protein is UPF0235 protein ESA_00387 of Cronobacter sakazakii (strain ATCC BAA-894) (Enterobacter sakazakii).